We begin with the raw amino-acid sequence, 166 residues long: Small ribosomal subunit protein uS5 (166 aa).

In terms of domain architecture, S5 DRBM spans 11–74 (LQEKLISVNR…DKARKNMIII (64 aa)).

It belongs to the universal ribosomal protein uS5 family. As to quaternary structure, part of the 30S ribosomal subunit. Contacts proteins S4 and S8.

Functionally, with S4 and S12 plays an important role in translational accuracy. In terms of biological role, located at the back of the 30S subunit body where it stabilizes the conformation of the head with respect to the body. The protein is Small ribosomal subunit protein uS5 of Wigglesworthia glossinidia brevipalpis.